The primary structure comprises 274 residues: UPF0173 metal-dependent hydrolase Adeh_1068 (274 aa).

This sequence belongs to the UPF0173 family.

The protein is UPF0173 metal-dependent hydrolase Adeh_1068 of Anaeromyxobacter dehalogenans (strain 2CP-C).